The sequence spans 201 residues: Phosphoheptose isomerase 2 (201 aa).

In terms of domain architecture, SIS spans 39 to 198 (VIKAYKNGNK…EEELFGKGFS (160 aa)). A substrate-binding site is contributed by 54-56 (NGG). The Zn(2+) site is built by histidine 63 and glutamate 67. Substrate-binding positions include glutamate 67, 96-97 (ND), 122-124 (STS), serine 127, and glutamine 174. Residues glutamine 174 and histidine 182 each coordinate Zn(2+).

Belongs to the SIS family. GmhA subfamily. As to quaternary structure, homotetramer. Requires Zn(2+) as cofactor.

Its subcellular location is the cytoplasm. The catalysed reaction is 2 D-sedoheptulose 7-phosphate = D-glycero-alpha-D-manno-heptose 7-phosphate + D-glycero-beta-D-manno-heptose 7-phosphate. The protein operates within carbohydrate biosynthesis; D-glycero-D-manno-heptose 7-phosphate biosynthesis; D-glycero-alpha-D-manno-heptose 7-phosphate and D-glycero-beta-D-manno-heptose 7-phosphate from sedoheptulose 7-phosphate: step 1/1. It participates in capsule biogenesis; capsule polysaccharide biosynthesis. In terms of biological role, catalyzes the isomerization of sedoheptulose 7-phosphate in D-glycero-D-manno-heptose 7-phosphate. No activity with L-galacto-heptulose, L-galacto-heptulose 7-phosphate or D-manno-heptulose. This is Phosphoheptose isomerase 2 from Campylobacter jejuni subsp. jejuni serotype O:2 (strain ATCC 700819 / NCTC 11168).